Here is a 347-residue protein sequence, read N- to C-terminus: MKPPILIIIMSTVMSGTMIVLTSSHWLLTWIGFEMNMLAIIPILMKNHTPRATEASTKYFLTQATASMLLMMGIIINLMFSGEWTISKIPNPIASGLVTIALTMKLGMAPFHFWVPEVTQGISLSSGMILLTWQKIAPLSVLYQISPSINPKLLITMAIASVLIGGWGGLNQTQLRKILAYSSIAHMGWMTVILTYNPTLMVLNLTIYITMTLSTFMLFMHNSSTTTLSLSNTWNKLPLMTSLILMLMMSLGGLPPLSGFAPKWMIIQELTKNDMIILPTFMAITALLNLYFYMRLSYSTALTMFPSVNNMKMKWQFESAKKIILLPPLIIISTMLLPMTPMMSILE.

11 consecutive transmembrane segments (helical) span residues 3-23 (PPIL…VLTS), 25-45 (HWLL…PILM), 60-80 (FLTQ…NLMF), 96-116 (GLVT…FWVP), 122-142 (ISLS…LSVL), 153-173 (LLIT…LNQT), 178-198 (ILAY…TYNP), 200-220 (LMVL…MLFM), 237-257 (LPLM…LPPL), 274-294 (DMII…YFYM), and 323-343 (IILL…TPMM).

This sequence belongs to the complex I subunit 2 family. In terms of assembly, core subunit of respiratory chain NADH dehydrogenase (Complex I) which is composed of 45 different subunits. Interacts with TMEM242.

It is found in the mitochondrion inner membrane. The catalysed reaction is a ubiquinone + NADH + 5 H(+)(in) = a ubiquinol + NAD(+) + 4 H(+)(out). Core subunit of the mitochondrial membrane respiratory chain NADH dehydrogenase (Complex I) which catalyzes electron transfer from NADH through the respiratory chain, using ubiquinone as an electron acceptor. Essential for the catalytic activity and assembly of complex I. The polypeptide is NADH-ubiquinone oxidoreductase chain 2 (Phoca vitulina (Harbor seal)).